The chain runs to 431 residues: Dihydroorotase (431 aa).

Residues histidine 55 and histidine 57 each contribute to the Zn(2+) site. Residues 57-59 (HFR) and asparagine 89 contribute to the substrate site. Residues lysine 139, histidine 169, histidine 223, and aspartate 290 each coordinate Zn(2+). An N6-carboxylysine modification is found at lysine 139. Residue aspartate 290 is part of the active site. Residues histidine 294 and 308–309 (PG) each bind substrate.

It belongs to the metallo-dependent hydrolases superfamily. DHOase family. Class I DHOase subfamily. It depends on Zn(2+) as a cofactor.

The catalysed reaction is (S)-dihydroorotate + H2O = N-carbamoyl-L-aspartate + H(+). Its pathway is pyrimidine metabolism; UMP biosynthesis via de novo pathway; (S)-dihydroorotate from bicarbonate: step 3/3. Its function is as follows. Catalyzes the reversible cyclization of carbamoyl aspartate to dihydroorotate. The protein is Dihydroorotase of Methanothermobacter thermautotrophicus (strain ATCC 29096 / DSM 1053 / JCM 10044 / NBRC 100330 / Delta H) (Methanobacterium thermoautotrophicum).